The primary structure comprises 97 residues: Citrate lyase acyl carrier protein (97 aa).

Position 14 is an O-(phosphoribosyl dephospho-coenzyme A)serine (S14).

The protein belongs to the CitD family. As to quaternary structure, oligomer with a subunit composition of (alpha,beta,gamma)6.

The protein localises to the cytoplasm. Functionally, covalent carrier of the coenzyme of citrate lyase. This Cronobacter sakazakii (strain ATCC BAA-894) (Enterobacter sakazakii) protein is Citrate lyase acyl carrier protein.